The following is a 387-amino-acid chain: Alanine racemase (387 aa).

Lys-38 acts as the Proton acceptor; specific for D-alanine in catalysis. Lys-38 carries the N6-(pyridoxal phosphate)lysine modification. Arg-136 serves as a coordination point for substrate. The active-site Proton acceptor; specific for L-alanine is Tyr-267. Met-315 contacts substrate.

Belongs to the alanine racemase family. Pyridoxal 5'-phosphate serves as cofactor.

It carries out the reaction L-alanine = D-alanine. Its pathway is amino-acid biosynthesis; D-alanine biosynthesis; D-alanine from L-alanine: step 1/1. Its function is as follows. Catalyzes the interconversion of L-alanine and D-alanine. May also act on other amino acids. The sequence is that of Alanine racemase (alr) from Clostridium novyi (strain NT).